The sequence spans 310 residues: Oxygen-dependent coproporphyrinogen-III oxidase (310 aa).

S92 serves as a coordination point for substrate. Positions 96 and 106 each coordinate a divalent metal cation. H106 (proton donor) is an active-site residue. 108–110 (NVR) provides a ligand contact to substrate. Residues H145 and H175 each contribute to the a divalent metal cation site. The interval 240 to 275 (YVEFNLIWDRGTLFGLQSGGRTESILMSMPPLARWE) is important for dimerization. 258–260 (GGR) contacts substrate.

Belongs to the aerobic coproporphyrinogen-III oxidase family. As to quaternary structure, homodimer. Requires a divalent metal cation as cofactor.

Its subcellular location is the cytoplasm. The enzyme catalyses coproporphyrinogen III + O2 + 2 H(+) = protoporphyrinogen IX + 2 CO2 + 2 H2O. Its pathway is porphyrin-containing compound metabolism; protoporphyrin-IX biosynthesis; protoporphyrinogen-IX from coproporphyrinogen-III (O2 route): step 1/1. Its function is as follows. Involved in the heme biosynthesis. Catalyzes the aerobic oxidative decarboxylation of propionate groups of rings A and B of coproporphyrinogen-III to yield the vinyl groups in protoporphyrinogen-IX. The sequence is that of Oxygen-dependent coproporphyrinogen-III oxidase from Pectobacterium atrosepticum (strain SCRI 1043 / ATCC BAA-672) (Erwinia carotovora subsp. atroseptica).